The primary structure comprises 154 residues: Isotocin-neurophysin IT 1 (154 aa).

Positions 1–20 (MSGSMFSVFSLLYLLSVCSA) are cleaved as a signal peptide. C21 and C26 are joined by a disulfide. G29 is subject to Glycine amide. Disulfide bonds link C42/C86, C45/C59, C53/C76, C60/C66, C93/C105, C99/C117, and C106/C111.

The protein belongs to the vasopressin/oxytocin family.

In terms of biological role, isotocin causes contraction of smooth muscles. The polypeptide is Isotocin-neurophysin IT 1 (Catostomus commersonii (White sucker)).